Consider the following 699-residue polypeptide: Elongation factor G (699 aa).

One can recognise a tr-type G domain in the interval 8–288; sequence EDYRNFGIMA…AVVDYLPSPL (281 aa). GTP contacts are provided by residues 17 to 24, 86 to 90, and 140 to 143; these read AHIDAGKT, DTPGH, and NKMD.

It belongs to the TRAFAC class translation factor GTPase superfamily. Classic translation factor GTPase family. EF-G/EF-2 subfamily.

Its subcellular location is the cytoplasm. Catalyzes the GTP-dependent ribosomal translocation step during translation elongation. During this step, the ribosome changes from the pre-translocational (PRE) to the post-translocational (POST) state as the newly formed A-site-bound peptidyl-tRNA and P-site-bound deacylated tRNA move to the P and E sites, respectively. Catalyzes the coordinated movement of the two tRNA molecules, the mRNA and conformational changes in the ribosome. This Agrobacterium fabrum (strain C58 / ATCC 33970) (Agrobacterium tumefaciens (strain C58)) protein is Elongation factor G.